The sequence spans 351 residues: Probable protein phosphatase 2C 41 (351 aa).

A PPM-type phosphatase domain is found at 62–348; it reads FTSICSNRGE…DDISVLCLFF (287 aa). Residues aspartate 98, glycine 99, aspartate 293, and aspartate 339 each coordinate Mn(2+).

The protein belongs to the PP2C family. The cofactor is Mg(2+). It depends on Mn(2+) as a cofactor.

The enzyme catalyses O-phospho-L-seryl-[protein] + H2O = L-seryl-[protein] + phosphate. It carries out the reaction O-phospho-L-threonyl-[protein] + H2O = L-threonyl-[protein] + phosphate. This chain is Probable protein phosphatase 2C 41, found in Arabidopsis thaliana (Mouse-ear cress).